Reading from the N-terminus, the 314-residue chain is 2,3-dihydroxyphenylpropionate/2,3-dihydroxicinnamic acid 1,2-dioxygenase (314 aa).

His115 functions as the Proton donor in the catalytic mechanism. Residue His179 is the Proton acceptor of the active site.

The protein belongs to the LigB/MhpB extradiol dioxygenase family. As to quaternary structure, homotetramer. It depends on Fe(2+) as a cofactor.

It catalyses the reaction 3-(2,3-dihydroxyphenyl)propanoate + O2 = (2Z,4E)-2-hydroxy-6-oxonona-2,4-dienedioate + H(+). It carries out the reaction (2E)-3-(2,3-dihydroxyphenyl)prop-2-enoate + O2 = (2Z,4E,7E)-2-hydroxy-6-oxonona-2,4,7-trienedioate + H(+). It participates in aromatic compound metabolism; 3-phenylpropanoate degradation. In terms of biological role, catalyzes the non-heme iron(II)-dependent oxidative cleavage of 2,3-dihydroxyphenylpropionic acid and 2,3-dihydroxicinnamic acid into 2-hydroxy-6-ketononadienedioate and 2-hydroxy-6-ketononatrienedioate, respectively. This is 2,3-dihydroxyphenylpropionate/2,3-dihydroxicinnamic acid 1,2-dioxygenase from Escherichia coli (strain 55989 / EAEC).